A 345-amino-acid chain; its full sequence is Protein SHI RELATED SEQUENCE 7 (345 aa).

The interval 7–28 (LGGRDHNKQDHHQEKDHNEDKS) is disordered. A compositionally biased stretch (basic and acidic residues) spans 9–28 (GRDHNKQDHHQEKDHNEDKS). Residues C119, C122, C130, C135, C139, and C146 each contribute to the Zn(2+) site. Residues 119–146 (CQDCGNQAKKDCPHMRCRTCCKSRGFDC) constitute a DNA-binding region (zn(2)-C6 fungal-type; degenerate). A disordered region spans residues 168–200 (AVLPAKRIRDANSRGGGDDDDDDKEDEKNDSCG). A Required for homo- and heterodimerization motif is present at residues 256–259 (IGGH).

It belongs to the SHI protein family. In terms of tissue distribution, mainly expressed in the filaments of flowers, the shoot apex regions and pollen. Also present in leaves.

Its subcellular location is the nucleus. Transcription activator that binds DNA on 5'-ACTCTAC-3' and promotes auxin homeostasis-regulating gene expression (e.g. YUC genes), as well as genes affecting stamen development, cell expansion and timing of flowering. Synergistically with other SHI-related proteins, regulates gynoecium, stamen and leaf development in a dose-dependent manner, controlling apical-basal patterning. Promotes style and stigma formation, and influences vascular development during gynoecium development. May also have a role in the formation and/or maintenance of the shoot apical meristem (SAM). Regulates anther dehiscence and floral development. This Arabidopsis thaliana (Mouse-ear cress) protein is Protein SHI RELATED SEQUENCE 7 (SRS7).